Consider the following 341-residue polypeptide: Thromboxane A2 receptor (341 aa).

The Extracellular portion of the chain corresponds to 1 to 29; sequence MWPNGTSLGACFRPVNITLQERRAIASPW. 2 N-linked (GlcNAc...) asparagine glycosylation sites follow: Asn-4 and Asn-16. A helical transmembrane segment spans residues 30 to 52; the sequence is FAASFCALGLGSNLLALSVLAGA. The Cytoplasmic portion of the chain corresponds to 53–65; that stretch reads RPGAGPRSSFLAL. The chain crosses the membrane as a helical span at residues 66–86; it reads LCGLVLTDFLGLLVTGAIVAS. Residues 87-105 are Extracellular-facing; it reads QHAALLDWRATDPSCRLCY. The cysteines at positions 104 and 181 are disulfide-linked. A helical transmembrane segment spans residues 106–127; sequence FMGVAMVFFGLCPLLLGAAMAS. The Cytoplasmic portion of the chain corresponds to 128–147; the sequence is ERFVGITRPFSRPTATSRRA. The chain crosses the membrane as a helical span at residues 148 to 170; the sequence is WATVGLVWVAAGALGLLPLLGLG. Residues 171–191 lie on the Extracellular side of the membrane; that stretch reads RYSVQYPGSWCFLTLGTQRGD. A helical transmembrane segment spans residues 192–217; that stretch reads VVFGLIFALLGSASVGLSLLLNTVSV. Topologically, residues 218–244 are cytoplasmic; the sequence is ATLCRVYHTREATQRPRDCEVEMMVQL. Residues 245-268 form a helical membrane-spanning segment; the sequence is VGIMVVATVCWMPLLVFIMQTLLQ. Topologically, residues 269–287 are extracellular; it reads TPPVMSFSGQLLRATEHQL. Residues 288–309 form a helical membrane-spanning segment; the sequence is LIYLRVATWNQILDPWVYILFR. The Cytoplasmic portion of the chain corresponds to 310–341; it reads RSVLRRLHPRFSSQLQAVSLRRPPAQAMLSGP. Phosphoserine is present on Ser-328.

The protein belongs to the G-protein coupled receptor 1 family. Interacts with RPGRIP1L. Interacts with RACK1; the interaction regulates TBXA2R cell surface expression.

It localises to the cell membrane. Receptor for thromboxane A2 (TXA2), a potent stimulator of platelet aggregation. The activity of this receptor is mediated by a G-protein that activates a phosphatidylinositol-calcium second messenger system. In the kidney, the binding of TXA2 to glomerular TP receptors causes intense vasoconstriction. Activates phospholipase C and adenylyl cyclase. This Mus musculus (Mouse) protein is Thromboxane A2 receptor (Tbxa2r).